A 315-amino-acid polypeptide reads, in one-letter code: Gamma-hemolysin component C (315 aa).

An N-terminal signal peptide occupies residues 1-29 (MLKNKILATTLSVSLLAPLANPLLENAKA).

Belongs to the aerolysin family. Toxicity requires sequential binding and synergistic association of a class S and a class F component which form heterooligomeric complexes. HlgC (class S) associates with HlgB (class F) thus forming an CB toxin.

Its function is as follows. Toxin that seems to act by forming pores in the membrane of the cell. Has a hemolytic and a leucotoxic activity. The sequence is that of Gamma-hemolysin component C (hlgC) from Staphylococcus aureus (strain Mu50 / ATCC 700699).